Consider the following 917-residue polypeptide: MATSVDNRHYPTMNGVAHAFKPPLVPSPRSFDRHRHQNQTLDVILTETKIVKETEVITTVVDSYDDSSSDDEDESHNRNVPYYKELVKKSNSDLEPSILDPRDESTADSWIQRNSSMLRLTGKHPFNAEAPLPRLMHHGFITPVPLHYVRNHGAVPKANWSDWSIEITGLVKRPAKFTMEELISEFPSREFPVTLVCAGNRRKEQNMVKQTIGFNWGSAGVSTSLWKGIPLSEILRRCGIYSRRGGALNVCFEGAEDLPGGGGSKYGTSIKKEMAMDPARDIILAYMQNGELLTPDHGFPVRVIVPGFIGGRMVKWLKRIIVTPQESDSYYHYKDNRVLPSLVDAELANSEAWWYKPEYIINELNINSVITTPGHAEILPINAFTTQKPYTLKGYAYSGGGKKVTRVEVTLDGGDTWSVCELDHQEKPNKYGKFWCWCFWSLDVEVLDLLSAKDVAVRAWDESFNTQPDKLIWNLMGMMNNCWFRIRTNVCKPHRGEIGIVFEHPTRPGNQSGGWMAKERQLEISSESNNTLKKSVSSPFMNTASKMYSISEVRKHNTADSAWIIVHGHIYDCTRFLKDHPGGTDSILINAGTDCTEEFEAIHSDKAKKLLEDYRIGELITTGYDSSPNVSVHGASNFGPLLAPIKELTPQKNIALVNPREKIPVRLIEKTSISHDVRKFRFALPSEDQQLGLPVGKHVFVCANINDKLCLRAYTPTSAIDAVGHIDLVVKVYFKDVHPRFPNGGLMSQHLDSLPIGSMIDIKGPLGHIEYKGKGNFLVSGKPKFAKKLAMLAGGTGITPIYQIIQSILSDPEDETEMYVVYANRTEDDILVREELEGWASKHKERLKIWYVVEIAKEGWSYSTGFITEAVLREHIPEGLEGESLALACGPPPMIQFALQPNLEKMGYNVKEDLLIF.

The disordered stretch occupies residues 62 to 81 (DSYDDSSSDDEDESHNRNVP). Residues 63 to 74 (SYDDSSSDDEDE) show a composition bias toward acidic residues. Residue C197 participates in Mo-molybdopterin binding. The 76-residue stretch at 545–620 (SKMYSISEVR…LEDYRIGELI (76 aa)) folds into the Cytochrome b5 heme-binding domain. Residues H580 and H603 each coordinate heme. Residues 660–772 (REKIPVRLIE…KGPLGHIEYK (113 aa)) form the FAD-binding FR-type domain. Residues 712–715 (RAYT), 729–733 (VVKVY), F734, F741, 746–748 (LMS), and T799 each bind FAD.

This sequence belongs to the nitrate reductase family. Homodimer. Requires FAD as cofactor. Heme serves as cofactor. It depends on Mo-molybdopterin as a cofactor. In terms of tissue distribution, root, leaf, and shoot.

The enzyme catalyses nitrite + NAD(+) + H2O = nitrate + NADH + H(+). Nitrate reductase is a key enzyme involved in the first step of nitrate assimilation in plants, fungi and bacteria. This chain is Nitrate reductase [NADH] 1 (NIA1), found in Arabidopsis thaliana (Mouse-ear cress).